The following is a 229-amino-acid chain: Orotidine 5'-phosphate decarboxylase (229 aa).

Substrate is bound by residues Asp10, Lys32, 59 to 68, Thr119, Arg180, Gln189, Gly209, and Arg210; that span reads DLKFHDIPNT. Lys61 acts as the Proton donor in catalysis.

Belongs to the OMP decarboxylase family. Type 1 subfamily. As to quaternary structure, homodimer.

It carries out the reaction orotidine 5'-phosphate + H(+) = UMP + CO2. It functions in the pathway pyrimidine metabolism; UMP biosynthesis via de novo pathway; UMP from orotate: step 2/2. Its function is as follows. Catalyzes the decarboxylation of orotidine 5'-monophosphate (OMP) to uridine 5'-monophosphate (UMP). This chain is Orotidine 5'-phosphate decarboxylase, found in Legionella pneumophila subsp. pneumophila (strain Philadelphia 1 / ATCC 33152 / DSM 7513).